The following is a 237-amino-acid chain: NAD-dependent protein deacetylase (237 aa).

Residues 1-237 (MFTTSLRQAQ…LVETNRALQK (237 aa)) form the Deacetylase sirtuin-type domain. NAD(+)-binding residues include Ala18, Thr22, Phe29, Arg30, Gln95, Asp98, and His113. Phe29 lines the nicotinamide pocket. Position 98 (Asp98) interacts with nicotinamide. The Proton acceptor role is filled by His113. 4 residues coordinate Zn(2+): Cys121, Cys124, Cys140, and Cys142. NAD(+) is bound by residues Ser180, Ser181, Asn205, and Ile224.

The protein belongs to the sirtuin family. Class U subfamily. It depends on Zn(2+) as a cofactor.

Its subcellular location is the cytoplasm. It catalyses the reaction N(6)-acetyl-L-lysyl-[protein] + NAD(+) + H2O = 2''-O-acetyl-ADP-D-ribose + nicotinamide + L-lysyl-[protein]. Its function is as follows. NAD-dependent protein deacetylase which modulates the activities of several enzymes which are inactive in their acetylated form. This Shouchella clausii (strain KSM-K16) (Alkalihalobacillus clausii) protein is NAD-dependent protein deacetylase.